The chain runs to 86 residues: Photosystem I reaction center subunit PsaK 1 (86 aa).

The next 2 membrane-spanning stretches (helical) occupy residues 14–34 (LSWS…AIAF) and 61–81 (AVLG…LGLA).

This sequence belongs to the PsaG/PsaK family.

It is found in the cellular thylakoid membrane. The protein is Photosystem I reaction center subunit PsaK 1 (psaK1) of Synechocystis sp. (strain ATCC 27184 / PCC 6803 / Kazusa).